The following is a 336-amino-acid chain: N-acetyl-gamma-glutamyl-phosphate reductase (336 aa).

Residue Cys156 is part of the active site.

This sequence belongs to the NAGSA dehydrogenase family. Type 1 subfamily.

Its subcellular location is the cytoplasm. It carries out the reaction N-acetyl-L-glutamate 5-semialdehyde + phosphate + NADP(+) = N-acetyl-L-glutamyl 5-phosphate + NADPH + H(+). It functions in the pathway amino-acid biosynthesis; L-arginine biosynthesis; N(2)-acetyl-L-ornithine from L-glutamate: step 3/4. Catalyzes the NADPH-dependent reduction of N-acetyl-5-glutamyl phosphate to yield N-acetyl-L-glutamate 5-semialdehyde. The sequence is that of N-acetyl-gamma-glutamyl-phosphate reductase from Moritella profunda.